The primary structure comprises 86 residues: Serine protease inhibitor Kazal-type 2 (86 aa).

A signal peptide spans 1–16; that stretch reads MLRLVLLLLATDFAAS. In terms of domain architecture, Kazal-like spans 32 to 86; that stretch reads QFRTPDCHRFDYPVCSKHLSPVCGTDMNTYGNECTLCMKIREDGSHINIIKDEPC. Disulfide bonds link Cys38–Cys68, Cys46–Cys65, and Cys54–Cys86.

The protein resides in the secreted. The protein localises to the cytoplasmic vesicle. Its subcellular location is the secretory vesicle. It localises to the acrosome. As a strong inhibitor of acrosin, it is required for normal spermiogenesis. It probably hinders premature activation of proacrosin and other proteases, thus preventing the cascade of events leading to spermiogenesis defects. May be involved in the regulation of serine protease-dependent germ cell apoptosis. It also inhibits trypsin. This Rattus norvegicus (Rat) protein is Serine protease inhibitor Kazal-type 2 (Spink2).